The following is a 266-amino-acid chain: Thymidylate synthase (266 aa).

R24 lines the dUMP pocket. Residue H54 participates in (6R)-5,10-methylene-5,6,7,8-tetrahydrofolate binding. DUMP is bound at residue 129–130 (RR). The active-site Nucleophile is the C149. DUMP contacts are provided by residues 169-172 (RSAD), N180, and 210-212 (HIY). Position 172 (D172) interacts with (6R)-5,10-methylene-5,6,7,8-tetrahydrofolate. (6R)-5,10-methylene-5,6,7,8-tetrahydrofolate is bound at residue A265.

It belongs to the thymidylate synthase family. Bacterial-type ThyA subfamily. As to quaternary structure, homodimer.

It is found in the cytoplasm. The enzyme catalyses dUMP + (6R)-5,10-methylene-5,6,7,8-tetrahydrofolate = 7,8-dihydrofolate + dTMP. Its pathway is pyrimidine metabolism; dTTP biosynthesis. Catalyzes the reductive methylation of 2'-deoxyuridine-5'-monophosphate (dUMP) to 2'-deoxythymidine-5'-monophosphate (dTMP) while utilizing 5,10-methylenetetrahydrofolate (mTHF) as the methyl donor and reductant in the reaction, yielding dihydrofolate (DHF) as a by-product. This enzymatic reaction provides an intracellular de novo source of dTMP, an essential precursor for DNA biosynthesis. This chain is Thymidylate synthase, found in Mycobacterium sp. (strain KMS).